A 172-amino-acid polypeptide reads, in one-letter code: Female-specific lacrimal gland protein (172 aa).

The signal sequence occupies residues 1–16; the sequence is MVKFLLLALALGVSCA. Disulfide bonds link Cys-60/Cys-64 and Cys-79/Cys-170.

Belongs to the calycin superfamily. Lipocalin family. In terms of tissue distribution, expressed in the lacrimal gland from where it is secreted into tears (at protein level).

It localises to the secreted. This Mesocricetus auratus (Golden hamster) protein is Female-specific lacrimal gland protein.